Here is a 394-residue protein sequence, read N- to C-terminus: Phosphoglycerate kinase (394 aa).

Residues 21–23, R36, 59–62, R118, and R151 contribute to the substrate site; these read DFN and HMGR. Residues K202, E324, and 350–353 contribute to the ATP site; that span reads GGDS.

Belongs to the phosphoglycerate kinase family. As to quaternary structure, monomer.

It localises to the cytoplasm. The catalysed reaction is (2R)-3-phosphoglycerate + ATP = (2R)-3-phospho-glyceroyl phosphate + ADP. It participates in carbohydrate degradation; glycolysis; pyruvate from D-glyceraldehyde 3-phosphate: step 2/5. This Exiguobacterium sibiricum (strain DSM 17290 / CCUG 55495 / CIP 109462 / JCM 13490 / 255-15) protein is Phosphoglycerate kinase.